Here is a 344-residue protein sequence, read N- to C-terminus: Heat-inducible transcription repressor HrcA (344 aa).

The protein belongs to the HrcA family.

Its function is as follows. Negative regulator of class I heat shock genes (grpE-dnaK-dnaJ and groELS operons). Prevents heat-shock induction of these operons. The protein is Heat-inducible transcription repressor HrcA of Streptococcus pyogenes serotype M6 (strain ATCC BAA-946 / MGAS10394).